The primary structure comprises 176 residues: Tubulin polymerization-promoting protein family member 3 (176 aa).

Residues 132-151 (TGSHKERFDQTGKGKGKSGR) form a disordered region. A compositionally biased stretch (basic and acidic residues) spans 134-151 (SHKERFDQTGKGKGKSGR).

It belongs to the TPPP family.

The protein localises to the cytoplasm. It is found in the cytoskeleton. In terms of biological role, regulator of microtubule dynamic that has microtubule bundling activity. The polypeptide is Tubulin polymerization-promoting protein family member 3 (tppp3) (Xenopus laevis (African clawed frog)).